The chain runs to 392 residues: PMA1 stabilization in the Golgi protein 1 (392 aa).

Residues M1 to G22 form the signal peptide. Residues T34 and T35 are each glycosylated (O-linked (Man) threonine). S36 is a glycosylation site (O-linked (Man) serine). Residue T45 is glycosylated (O-linked (Man) threonine). O-linked (Man) serine glycosylation occurs at S49. T55, T57, and T63 each carry an O-linked (Man) threonine glycan. Residue S65 is glycosylated (O-linked (Man) serine). O-linked (Man) threonine glycosylation is present at T71. S80 carries O-linked (Man) serine glycosylation. 2 O-linked (Man) threonine glycosylation sites follow: T89 and T99. A glycan (O-linked (Man) serine) is linked at S107. Residues T108 and T112 are each glycosylated (O-linked (Man) threonine). Residues S114 and S115 are each glycosylated (O-linked (Man) serine). A glycan (O-linked (Man) threonine) is linked at T117. O-linked (Man) serine glycosylation is found at S119 and S148. T156 carries an O-linked (Man) threonine glycan. O-linked (Man) serine glycosylation occurs at S171. T176 is a glycosylation site (O-linked (Man) threonine). The O-linked (Man) serine glycan is linked to S181. O-linked (Man) threonine glycosylation is found at T188, T192, T195, and T199. Residues S203 and S215 are each glycosylated (O-linked (Man) serine). Over D230–Y317 the chain is Lumenal. The chain crosses the membrane as a helical span at residues Y318–L338. The Cytoplasmic segment spans residues Y339–N392.

In terms of assembly, interacts with EXP1. PSG1-N' interacts with ERAD-related proteins involved in PMA1 quality control including EPS1, CDC48, UBX2 and SSM4. PSG1-C' interacts with the TLG1/2 SNARE complex proteins TLG1, TLG2 and VTI1. The precursor protein is cleaved into two polypeptide chains, PSG1-N' and PSG1-C'. The cleavage is performed in the Golgi apparatus by Ca(+)-dependent serine protease KEX2 between Arg-229 and Asp-230. In terms of processing, PSG1-N' is highly O-mannosylated.

The protein localises to the golgi apparatus lumen. Its subcellular location is the cytoplasmic vesicle. The protein resides in the COPI-coated vesicle membrane. Functionally, with EXP1, the specific cargo receptor protein for the plasma membrane ATPase PMA1, is involved in the transport and/or maturation of PMA1. EXP1 and PSG1 probably act sequentially to promote PMA1 sorting between the ER and the Golgi, with EXP1 promoting PMA1 export from the ER to the Golgi while PSG1 has a role in PMA1 maturation or quality control in the Golgi. PSG1 might also couple PMA1 sorting and maturation in the early secretory pathway with the glycosylation machinery. In terms of biological role, PSG1 is cleaved by KEX2 in two stable peptides, PSG1-N' and PSG1-C', the former supporting a role in maturation quality control, the latter having a role in modulating vesicular trafficking. The sequence is that of PMA1 stabilization in the Golgi protein 1 from Saccharomyces cerevisiae (strain ATCC 204508 / S288c) (Baker's yeast).